We begin with the raw amino-acid sequence, 129 residues long: ATP synthase epsilon chain (129 aa).

The protein belongs to the ATPase epsilon chain family. As to quaternary structure, F-type ATPases have 2 components, CF(1) - the catalytic core - and CF(0) - the membrane proton channel. CF(1) has five subunits: alpha(3), beta(3), gamma(1), delta(1), epsilon(1). CF(0) has three main subunits: a, b and c.

The protein localises to the cell inner membrane. Its function is as follows. Produces ATP from ADP in the presence of a proton gradient across the membrane. The sequence is that of ATP synthase epsilon chain from Campylobacter fetus subsp. fetus (strain 82-40).